A 529-amino-acid chain; its full sequence is Na(+)/H(+) antiporter NhaB (529 aa).

The next 12 membrane-spanning stretches (helical) occupy residues 13-33, 34-54, 90-110, 113-133, 136-156, 205-225, 241-261, 306-326, 327-347, 351-371, 451-471, and 479-499; these read FLGK…IINP, IVFF…EFIF, LVAN…IYFM, LLLF…ILSL, CFAA…AVVI, LLMH…VGEP, FLIR…LTCF, GLIA…VGLI, GLSV…HSLG, EEAL…AVII, ATPN…APLI, and VIMA…GIVF.

This sequence belongs to the NhaB Na(+)/H(+) (TC 2.A.34) antiporter family.

The protein localises to the cell inner membrane. The enzyme catalyses 2 Na(+)(in) + 3 H(+)(out) = 2 Na(+)(out) + 3 H(+)(in). Na(+)/H(+) antiporter that extrudes sodium in exchange for external protons. The chain is Na(+)/H(+) antiporter NhaB from Vibrio vulnificus (strain CMCP6).